Consider the following 45-residue polypeptide: Large ribosomal subunit protein bL34 (45 aa).

It belongs to the bacterial ribosomal protein bL34 family.

In Corynebacterium urealyticum (strain ATCC 43042 / DSM 7109), this protein is Large ribosomal subunit protein bL34.